We begin with the raw amino-acid sequence, 171 residues long: MHRAPVGRNAEGQYFMFCFEHVKEYNKGYNFFSGLSDSEVARYQKEAITGHRPTWTVGVNKNAKNGPTQSQTRSGSAGAQARMRDPFGFVSEARARSGRPEPRQRKLKTLEAKAFETLGLGASATTADIKAAYKDLVKKHHPDANGGDRGSEERFRAVIQAYQLLKQAGFC.

The disordered stretch occupies residues 56 to 83 (TVGVNKNAKNGPTQSQTRSGSAGAQARM). A compositionally biased stretch (polar residues) spans 57–77 (VGVNKNAKNGPTQSQTRSGSA). The 58-residue stretch at 113-170 (KAFETLGLGASATTADIKAAYKDLVKKHHPDANGGDRGSEERFRAVIQAYQLLKQAGF) folds into the J domain.

This is an uncharacterized protein from Sinorhizobium sp.